Consider the following 206-residue polypeptide: Protein-methionine-sulfoxide reductase heme-binding subunit MsrQ (206 aa).

4 helical membrane-spanning segments follow: residues 8-28 (IVWL…WLVW), 82-102 (LWCF…ELGI), 116-136 (PYLT…LTST), and 153-173 (FVYL…KILS).

The protein belongs to the MsrQ family. In terms of assembly, heterodimer of a catalytic subunit (MsrP) and a heme-binding subunit (MsrQ). The cofactor is FMN. Heme b serves as cofactor.

The protein resides in the cell inner membrane. Functionally, part of the MsrPQ system that repairs oxidized periplasmic proteins containing methionine sulfoxide residues (Met-O), using respiratory chain electrons. Thus protects these proteins from oxidative-stress damage caused by reactive species of oxygen and chlorine generated by the host defense mechanisms. MsrPQ is essential for the maintenance of envelope integrity under bleach stress, rescuing a wide series of structurally unrelated periplasmic proteins from methionine oxidation. MsrQ provides electrons for reduction to the reductase catalytic subunit MsrP, using the quinone pool of the respiratory chain. This is Protein-methionine-sulfoxide reductase heme-binding subunit MsrQ from Citrobacter koseri (strain ATCC BAA-895 / CDC 4225-83 / SGSC4696).